The primary structure comprises 269 residues: Tryptophan synthase alpha chain (269 aa).

Catalysis depends on proton acceptor residues E49 and D60.

This sequence belongs to the TrpA family. Tetramer of two alpha and two beta chains.

It carries out the reaction (1S,2R)-1-C-(indol-3-yl)glycerol 3-phosphate + L-serine = D-glyceraldehyde 3-phosphate + L-tryptophan + H2O. It functions in the pathway amino-acid biosynthesis; L-tryptophan biosynthesis; L-tryptophan from chorismate: step 5/5. In terms of biological role, the alpha subunit is responsible for the aldol cleavage of indoleglycerol phosphate to indole and glyceraldehyde 3-phosphate. In Acidovorax ebreus (strain TPSY) (Diaphorobacter sp. (strain TPSY)), this protein is Tryptophan synthase alpha chain.